The chain runs to 266 residues: Protein crossbronx-like (266 aa).

One can recognise a UBC core domain in the interval 15–178; that stretch reads KQGYHILAEY…VQEQAIASRN (164 aa).

It belongs to the ubiquitin-conjugating enzyme family. FTS subfamily.

In Drosophila erecta (Fruit fly), this protein is Protein crossbronx-like.